Here is an 881-residue protein sequence, read N- to C-terminus: Putative outer membrane usher protein YfcU (881 aa).

Residues 1–29 form the signal peptide; the sequence is MPDHSLFRLRILPWCIALAMSGSYSSVWA.

The protein belongs to the fimbrial export usher family.

It localises to the cell outer membrane. Its function is as follows. Part of the yfcOPQRSUV fimbrial operon. Could contribute to adhesion to various surfaces in specific environmental niches. Increases adhesion to eukaryotic T24 bladder epithelial cells in the absence of fim genes. Probably involved in the export and assembly of fimbrial subunits across the outer membrane. The sequence is that of Putative outer membrane usher protein YfcU (yfcU) from Escherichia coli (strain K12).